A 469-amino-acid polypeptide reads, in one-letter code: 1-aminocyclopropane-1-carboxylate synthase 8 (469 aa).

Residues glutamate 47 and tyrosine 85 each coordinate substrate. Lysine 272 is modified (N6-(pyridoxal phosphate)lysine).

Belongs to the class-I pyridoxal-phosphate-dependent aminotransferase family. As to quaternary structure, homodimer and heterodimer. In vivo, the relevance of heterodimerization with other ACS enzymes is however unsure. Interacts with GRF3. It depends on pyridoxal 5'-phosphate as a cofactor. In terms of processing, may be processed at its C-terminus. As to expression, expressed in roots. Expressed at low level in flowers and siliques.

The enzyme catalyses S-adenosyl-L-methionine = 1-aminocyclopropane-1-carboxylate + S-methyl-5'-thioadenosine + H(+). Its pathway is alkene biosynthesis; ethylene biosynthesis via S-adenosyl-L-methionine; ethylene from S-adenosyl-L-methionine: step 1/2. Functionally, 1-aminocyclopropane-1-carboxylate synthase (ACS) enzymes catalyze the conversion of S-adenosyl-L-methionine (SAM) into 1-aminocyclopropane-1-carboxylate (ACC), a direct precursor of ethylene. In Arabidopsis thaliana (Mouse-ear cress), this protein is 1-aminocyclopropane-1-carboxylate synthase 8 (ACS8).